Reading from the N-terminus, the 191-residue chain is COP9 signalosome complex subunit 8 (191 aa).

The PCI domain maps to 6–179 (MMAELDEKLL…VSLVPNEQQL (174 aa)).

This sequence belongs to the CSN8 family. In terms of assembly, component of the CSN complex, probably composed of cops1, cops2, cops3, cops4, cops5, cops6, cops7, cops8 and cops9.

It is found in the cytoplasm. The protein localises to the nucleus. Its function is as follows. Component of the COP9 signalosome complex (CSN), a complex involved in various cellular and developmental processes. The CSN complex is an essential regulator of the ubiquitin (Ubl) conjugation pathway by mediating the deneddylation of the cullin subunits of E3 ligase complexes, leading to modify the Ubl ligase activity. In Danio rerio (Zebrafish), this protein is COP9 signalosome complex subunit 8 (cops8).